The following is a 250-amino-acid chain: Proteasome subunit alpha type-4 (250 aa).

The protein belongs to the peptidase T1A family. The 26S proteasome consists of a 20S proteasome core and two 19S regulatory subunits. The 20S proteasome core is composed of 28 subunits that are arranged in four stacked rings, resulting in a barrel-shaped structure. The two end rings are each formed by seven alpha subunits, and the two central rings are each formed by seven beta subunits. The catalytic chamber with the active sites is on the inside of the barrel.

It localises to the cytoplasm. The protein localises to the nucleus. The proteasome is a multicatalytic proteinase complex which is characterized by its ability to cleave peptides with Arg, Phe, Tyr, Leu, and Glu adjacent to the leaving group at neutral or slightly basic pH. The proteasome has an ATP-dependent proteolytic activity. This Dictyostelium discoideum (Social amoeba) protein is Proteasome subunit alpha type-4 (psmA4).